A 167-amino-acid chain; its full sequence is NAD(P)H-quinone oxidoreductase subunit I, chloroplastic (167 aa).

2 consecutive 4Fe-4S ferredoxin-type domains span residues 55-84 (GRIHFEFDKCIACEVCVRVCPIDLPVVDWK) and 95-124 (LNYSIDFGICIFCGNCVEYCPTNCLSMTEE). Residues cysteine 64, cysteine 67, cysteine 70, cysteine 74, cysteine 104, cysteine 107, cysteine 110, and cysteine 114 each contribute to the [4Fe-4S] cluster site.

The protein belongs to the complex I 23 kDa subunit family. In terms of assembly, NDH is composed of at least 16 different subunits, 5 of which are encoded in the nucleus. Requires [4Fe-4S] cluster as cofactor.

The protein localises to the plastid. Its subcellular location is the chloroplast thylakoid membrane. The catalysed reaction is a plastoquinone + NADH + (n+1) H(+)(in) = a plastoquinol + NAD(+) + n H(+)(out). It carries out the reaction a plastoquinone + NADPH + (n+1) H(+)(in) = a plastoquinol + NADP(+) + n H(+)(out). In terms of biological role, NDH shuttles electrons from NAD(P)H:plastoquinone, via FMN and iron-sulfur (Fe-S) centers, to quinones in the photosynthetic chain and possibly in a chloroplast respiratory chain. The immediate electron acceptor for the enzyme in this species is believed to be plastoquinone. Couples the redox reaction to proton translocation, and thus conserves the redox energy in a proton gradient. The protein is NAD(P)H-quinone oxidoreductase subunit I, chloroplastic of Gossypium barbadense (Sea Island cotton).